Here is a 222-residue protein sequence, read N- to C-terminus: Flagellar L-ring protein (222 aa).

The first 21 residues, 1–21, serve as a signal peptide directing secretion; the sequence is MQTFLYPRTWLILGLLLLGSG. A lipid anchor (N-palmitoyl cysteine) is attached at Cys22. A lipid anchor (S-diacylglycerol cysteine) is attached at Cys22.

The protein belongs to the FlgH family. In terms of assembly, the basal body constitutes a major portion of the flagellar organelle and consists of four rings (L,P,S, and M) mounted on a central rod.

It localises to the cell outer membrane. It is found in the bacterial flagellum basal body. Assembles around the rod to form the L-ring and probably protects the motor/basal body from shearing forces during rotation. The sequence is that of Flagellar L-ring protein from Methylobacillus flagellatus (strain ATCC 51484 / DSM 6875 / VKM B-1610 / KT).